Here is a 193-residue protein sequence, read N- to C-terminus: NAD(P)H-quinone oxidoreductase subunit I (193 aa).

2 consecutive 4Fe-4S ferredoxin-type domains span residues 55-84 (GRIHFEFDKCIACEVCVRVCPINLPVVDWE) and 95-124 (KHYSIDFGVCIFCGNCVEYCPTNCLSMTEE). 8 residues coordinate [4Fe-4S] cluster: Cys64, Cys67, Cys70, Cys74, Cys104, Cys107, Cys110, and Cys114. A disordered region spans residues 169–193 (LDPHDLPSGNQRSGKRPEEIIAESD).

This sequence belongs to the complex I 23 kDa subunit family. NDH-1 is composed of at least 11 different subunits. [4Fe-4S] cluster is required as a cofactor.

The protein localises to the cellular thylakoid membrane. The catalysed reaction is a plastoquinone + NADH + (n+1) H(+)(in) = a plastoquinol + NAD(+) + n H(+)(out). It catalyses the reaction a plastoquinone + NADPH + (n+1) H(+)(in) = a plastoquinol + NADP(+) + n H(+)(out). In terms of biological role, NDH-1 shuttles electrons from an unknown electron donor, via FMN and iron-sulfur (Fe-S) centers, to quinones in the respiratory and/or the photosynthetic chain. The immediate electron acceptor for the enzyme in this species is believed to be plastoquinone. Couples the redox reaction to proton translocation, and thus conserves the redox energy in a proton gradient. The chain is NAD(P)H-quinone oxidoreductase subunit I from Rippkaea orientalis (strain PCC 8801 / RF-1) (Cyanothece sp. (strain PCC 8801)).